A 362-amino-acid chain; its full sequence is sn-glycerol-3-phosphate import ATP-binding protein UgpC (362 aa).

Residues 4-235 form the ABC transporter domain; it reads LSFRNVKKTY…PASTFVAGFI (232 aa). 37-44 contacts ATP; it reads GPSGCGKS.

The protein belongs to the ABC transporter superfamily. sn-glycerol-3-phosphate importer (TC 3.A.1.1.3) family. As to quaternary structure, the complex is composed of two ATP-binding proteins (UgpC), two transmembrane proteins (UgpA and UgpE) and a solute-binding protein (UgpB).

Its subcellular location is the cell inner membrane. The catalysed reaction is sn-glycerol 3-phosphate(out) + ATP + H2O = sn-glycerol 3-phosphate(in) + ADP + phosphate + H(+). Part of the ABC transporter complex UgpBAEC involved in sn-glycerol-3-phosphate (G3P) import. Responsible for energy coupling to the transport system. This is sn-glycerol-3-phosphate import ATP-binding protein UgpC from Bordetella pertussis (strain Tohama I / ATCC BAA-589 / NCTC 13251).